An 86-amino-acid polypeptide reads, in one-letter code: Large ribosomal subunit protein uL23 (86 aa).

It belongs to the universal ribosomal protein uL23 family. Part of the 50S ribosomal subunit. Contacts protein L29.

In terms of biological role, binds to 23S rRNA. One of the proteins that surrounds the polypeptide exit tunnel on the outside of the ribosome. The polypeptide is Large ribosomal subunit protein uL23 (Methanococcus maripaludis (strain DSM 14266 / JCM 13030 / NBRC 101832 / S2 / LL)).